Reading from the N-terminus, the 160-residue chain is Aspartate 1-decarboxylase 2 (160 aa).

Catalysis depends on serine 25, which acts as the Schiff-base intermediate with substrate; via pyruvic acid. Residue serine 25 is modified to Pyruvic acid (Ser). Threonine 57 provides a ligand contact to substrate. Catalysis depends on tyrosine 58, which acts as the Proton donor. Residue 73-75 coordinates substrate; that stretch reads GAA.

It belongs to the PanD family. As to quaternary structure, heterooctamer of four alpha and four beta subunits. It depends on pyruvate as a cofactor. Is synthesized initially as an inactive proenzyme, which is activated by self-cleavage at a specific serine bond to produce a beta-subunit with a hydroxyl group at its C-terminus and an alpha-subunit with a pyruvoyl group at its N-terminus.

Its subcellular location is the cytoplasm. It catalyses the reaction L-aspartate + H(+) = beta-alanine + CO2. It functions in the pathway cofactor biosynthesis; (R)-pantothenate biosynthesis; beta-alanine from L-aspartate: step 1/1. Catalyzes the pyruvoyl-dependent decarboxylation of aspartate to produce beta-alanine. The chain is Aspartate 1-decarboxylase 2 from Frankia casuarinae (strain DSM 45818 / CECT 9043 / HFP020203 / CcI3).